We begin with the raw amino-acid sequence, 206 residues long: Small ribosomal subunit protein uS4 (206 aa).

Positions 96–156 (TRLDNVVYRM…EKSRTQARIK (61 aa)) constitute an S4 RNA-binding domain.

This sequence belongs to the universal ribosomal protein uS4 family. As to quaternary structure, part of the 30S ribosomal subunit. Contacts protein S5. The interaction surface between S4 and S5 is involved in control of translational fidelity.

In terms of biological role, one of the primary rRNA binding proteins, it binds directly to 16S rRNA where it nucleates assembly of the body of the 30S subunit. With S5 and S12 plays an important role in translational accuracy. The polypeptide is Small ribosomal subunit protein uS4 (Shewanella amazonensis (strain ATCC BAA-1098 / SB2B)).